Here is a 493-residue protein sequence, read N- to C-terminus: Transcript termination protein A18 (493 aa).

The region spanning 100 to 256 (MIELKRPLYI…NSIINIAKLS (157 aa)) is the Helicase ATP-binding domain. An ATP-binding site is contributed by 113-120 (LACGFGKT). Residues 206–209 (DESH) carry the DESH box motif.

Belongs to the helicase family. Poxviruses subfamily. In terms of assembly, interacts with G2. Might be part of a transcription complex composed at least of G2, A18, and H5.

It is found in the virion. DNA helicase which seems to act as a postreplicative transcription termination factor. Involved in ATP-dependent release of nascent RNA. Forms a stable complex with single-stranded DNA, and to a lesser extent RNA. The chain is Transcript termination protein A18 from Camelus.